The primary structure comprises 266 residues: MARSPRIRIKDNDKAEYARLVKNTKAKIARTKKKYGVDLTAEIDIPDLDSFETRAQFNKWKEQASSFTNRANMRYQFEKNAYGVVASKAKIAEIERNTKEVQRLVDEKIKAMKDKEYYAGGKPQGTIEQRIAMTSPAHVTGINRPHDFDFSKVRSYSRLRTLEESMEMRTDPQYYEKKMIQLQLNFIKSVEGSFNSFDAADELIEELKKIPPDDFYELFLRISEISFEEFDSEGNTVENVEGNVYKILSYLEQYRRGDFDLSLKGF.

A disordered region spans residues 1–73 (MARSPRIRIK…ASSFTNRANM (73 aa)). The Nuclear localization signal motif lies at 25–34 (KAKIARTKKK). The segment at 74-172 (RYQFEKNAYG…EESMEMRTDP (99 aa)) is intermediate; makes extensive contacts with the phage DNA polymerase. The stretch at 86-113 (ASKAKIAEIERNTKEVQRLVDEKIKAMK) forms a coiled coil. A priming region spans residues 173-266 (QYYEKKMIQL…GDFDLSLKGF (94 aa)). The residue at position 232 (Ser232) is an O-(5'-phospho-DNA)-serine. Residues 256 to 258 (RGD) are interaction with the viral DNA polymerase.

Belongs to the phi29likevirus DNA terminal protein family. As to quaternary structure, interacts with the viral polymerase; this interaction allows the initiation of TP-primed DNA replication at both viral DNA ends. Binds to ssDNA. Interacts with the replication protein p1. Part of a DNA-gp3-gp16 complex.

Its subcellular location is the virion. The protein localises to the host nucleus. Acts as a primer for DNA elongation during viral genomic replication. Acts as the small terminase protein during packaging. Recruits the phage DNA polymerase to the bacterial nucleoid. Primer terminal protein (TP) is covalently linked to the 5'-ends of both strands of the genome through a phosphodiester bond between the beta-hydroxyl group of a serine residue and the 5'-phosphate of the terminal deoxyadenylate (dAMP). To start replication, the DNA polymerase forms a heterodimer with a free TP that recognizes the replication origins at both 5' ends of the linear chromosome, and initiates replication using as primer the OH-group of Ser-232 of the TP. Since the polymerase initiates the replication on the second thymine, the TP-dAMP initiation product slides backwards to recover the template information of the first nucleotide. In terms of biological role, hydrolyzes host peptidoglycans during virus entry. This is Primer terminal protein (3) from Bacillus phage phi29 (Bacteriophage phi-29).